Consider the following 470-residue polypeptide: Glutamyl-tRNA reductase (470 aa).

Substrate contacts are provided by residues 49–52, Ser109, 114–116, and Gln120; these read TCNR and ESQ. Residue Cys50 is the Nucleophile of the active site. 223–228 contributes to the NADP(+) binding site; that stretch reads GAGAVG.

Belongs to the glutamyl-tRNA reductase family. In terms of assembly, homodimer.

It catalyses the reaction (S)-4-amino-5-oxopentanoate + tRNA(Glu) + NADP(+) = L-glutamyl-tRNA(Glu) + NADPH + H(+). Its pathway is porphyrin-containing compound metabolism; protoporphyrin-IX biosynthesis; 5-aminolevulinate from L-glutamyl-tRNA(Glu): step 1/2. Its function is as follows. Catalyzes the NADPH-dependent reduction of glutamyl-tRNA(Glu) to glutamate 1-semialdehyde (GSA). In Frankia alni (strain DSM 45986 / CECT 9034 / ACN14a), this protein is Glutamyl-tRNA reductase.